We begin with the raw amino-acid sequence, 611 residues long: Large ribosomal subunit assembly factor BipA (611 aa).

The tr-type G domain maps to Lys7 to Thr202. Residues Asp19–Thr24 and Asn132–Asp135 contribute to the GTP site.

This sequence belongs to the TRAFAC class translation factor GTPase superfamily. Classic translation factor GTPase family. BipA subfamily. Monomer.

It localises to the cytoplasm. It catalyses the reaction GTP + H2O = GDP + phosphate + H(+). Its function is as follows. A 50S ribosomal subunit assembly protein with GTPase activity, required for 50S subunit assembly at low temperatures, may also play a role in translation. Binds GTP and analogs. Binds the 70S ribosome between the 30S and 50S subunits, in a similar position as ribosome-bound EF-G; it contacts a number of ribosomal proteins, both rRNAs and the A-site tRNA. This chain is Large ribosomal subunit assembly factor BipA, found in Buchnera aphidicola subsp. Baizongia pistaciae (strain Bp).